Here is a 116-residue protein sequence, read N- to C-terminus: Small ribosomal subunit protein uS8c (116 aa).

Belongs to the universal ribosomal protein uS8 family. Part of the 30S ribosomal subunit.

It localises to the plastid. Its subcellular location is the chloroplast. In terms of biological role, one of the primary rRNA binding proteins, it binds directly to 16S rRNA central domain where it helps coordinate assembly of the platform of the 30S subunit. This Musa acuminata (Banana) protein is Small ribosomal subunit protein uS8c (rps8).